Here is a 559-residue protein sequence, read N- to C-terminus: Formate--tetrahydrofolate ligase (559 aa).

Residue 68–75 (TPAGEGKS) coordinates ATP.

It belongs to the formate--tetrahydrofolate ligase family.

It catalyses the reaction (6S)-5,6,7,8-tetrahydrofolate + formate + ATP = (6R)-10-formyltetrahydrofolate + ADP + phosphate. It participates in one-carbon metabolism; tetrahydrofolate interconversion. The chain is Formate--tetrahydrofolate ligase from Bacillus licheniformis (strain ATCC 14580 / DSM 13 / JCM 2505 / CCUG 7422 / NBRC 12200 / NCIMB 9375 / NCTC 10341 / NRRL NRS-1264 / Gibson 46).